A 930-amino-acid chain; its full sequence is Protocadherin gamma-B6 (930 aa).

The N-terminal stretch at methionine 1–serine 30 is a signal peptide. Cadherin domains are found at residues glutamate 31–phenylalanine 133, aspartate 134–phenylalanine 242, serine 243–isoleucine 347, isoleucine 348–phenylalanine 452, aspartate 453–valine 562, and aspartate 570–leucine 675. The Extracellular segment spans residues glutamate 31 to tyrosine 691. 3 N-linked (GlcNAc...) asparagine glycosylation sites follow: asparagine 304, asparagine 419, and asparagine 545. The helical transmembrane segment at leucine 692–alanine 712 threads the bilayer. Topologically, residues leucine 713–lysine 930 are cytoplasmic. 2 disordered regions span residues proline 791–asparagine 839 and alanine 900–lysine 930. A compositionally biased stretch (polar residues) spans histidine 800–asparagine 839. The segment covering asparagine 920–lysine 930 has biased composition (basic residues).

It localises to the cell membrane. Functionally, potential calcium-dependent cell-adhesion protein. May be involved in the establishment and maintenance of specific neuronal connections in the brain. This is Protocadherin gamma-B6 (PCDHGB6) from Homo sapiens (Human).